We begin with the raw amino-acid sequence, 272 residues long: Phosphatidylglycerol--prolipoprotein diacylglyceryl transferase (272 aa).

4 helical membrane passes run Ile21 to Ala41, Tyr60 to Tyr80, Gly101 to Ala121, and Val131 to Gly151. Arg152 provides a ligand contact to a 1,2-diacyl-sn-glycero-3-phospho-(1'-sn-glycerol). A run of 3 helical transmembrane segments spans residues Pro181–Tyr201, Gly209–Phe229, and Leu244–Val264.

The protein belongs to the Lgt family.

The protein localises to the cell inner membrane. It carries out the reaction L-cysteinyl-[prolipoprotein] + a 1,2-diacyl-sn-glycero-3-phospho-(1'-sn-glycerol) = an S-1,2-diacyl-sn-glyceryl-L-cysteinyl-[prolipoprotein] + sn-glycerol 1-phosphate + H(+). It functions in the pathway protein modification; lipoprotein biosynthesis (diacylglyceryl transfer). Functionally, catalyzes the transfer of the diacylglyceryl group from phosphatidylglycerol to the sulfhydryl group of the N-terminal cysteine of a prolipoprotein, the first step in the formation of mature lipoproteins. This chain is Phosphatidylglycerol--prolipoprotein diacylglyceryl transferase, found in Aliarcobacter butzleri (strain RM4018) (Arcobacter butzleri).